The sequence spans 580 residues: Acyl-coenzyme A synthetase ACSM3, mitochondrial (580 aa).

A mitochondrion-targeting transit peptide spans 1 to 21 (MAMLLRARCFHRLAIPDPRRI). An N6-succinyllysine mark is found at K67 and K100. K151 is subject to N6-acetyllysine. ATP-binding positions include 229–237 (TSGTTGPPK), 368–373 (EGYGQT), D455, R470, and K566.

Belongs to the ATP-dependent AMP-binding enzyme family. Mg(2+) serves as cofactor. Requires Mn(2+) as cofactor.

It is found in the mitochondrion. It localises to the mitochondrion matrix. It carries out the reaction a medium-chain fatty acid + ATP + CoA = a medium-chain fatty acyl-CoA + AMP + diphosphate. The enzyme catalyses propanoate + ATP + CoA = propanoyl-CoA + AMP + diphosphate. The catalysed reaction is butanoate + ATP + CoA = butanoyl-CoA + AMP + diphosphate. It catalyses the reaction 2-methylpropanoate + ATP + CoA = 2-methylpropanoyl-CoA + AMP + diphosphate. It carries out the reaction 2-methylbutanoate + ATP + CoA = 2-methylbutanoyl-CoA + AMP + diphosphate. The enzyme catalyses octanoate + ATP + CoA = octanoyl-CoA + AMP + diphosphate. Functionally, catalyzes the activation of fatty acids by CoA to produce an acyl-CoA, the first step in fatty acid metabolism. Capable of activating medium-chain fatty acids with a preference for isobutyrate among fatty acids with 2-6 carbon atoms. This Rattus norvegicus (Rat) protein is Acyl-coenzyme A synthetase ACSM3, mitochondrial (Acsm3).